Reading from the N-terminus, the 465-residue chain is E3 ubiquitin-protein ligase parkin (465 aa).

The 76-residue stretch at 1–76 (MIVFVRFNSS…VHIVQRPWRK (76 aa)) folds into the Ubiquitin-like domain. S65 is modified (phosphoserine; by PINK1). The interval 77-99 (GQEMNATGGDDPRNAAGGCEREP) is disordered. The interval 77–237 (GQEMNATGGD…LIATNSRNIT (161 aa)) is necessary for PINK1-dependent localization to mitochondria. The RING-type 0; atypical zinc-finger motif lies at 141-225 (SIYNSFYVYC…PTSDKETSVA (85 aa)). Position 175 is a phosphothreonine; by PINK1 (T175). The tract at residues 204-238 (TSAEFFFKCGAHPTSDKETSVALHLIATNSRNITC) is SYT11 binding 1. Phosphothreonine is present on T217. The interval 234 to 465 (RNITCITCTD…VCMGDHWFDV (232 aa)) is TRIAD supradomain. 10 residues coordinate Zn(2+): C238, C241, C253, H257, C260, C263, C289, C293, C332, and C337. The RING-type 1 zinc-finger motif lies at 238 to 293 (CITCTDVRSPVLVFQCNSRHVICLDCFHLYCVTRLNDRQFVHDPQLGYSLPCVAGC). An SYT11 binding 2 region spans residues 257–293 (HVICLDCFHLYCVTRLNDRQFVHDPQLGYSLPCVAGC). The segment at 313 to 377 (NRYQQYGAEE…CKEAYHEGEC (65 aa)) adopts an IBR-type zinc-finger fold. A Glycyl lysine isopeptide (Lys-Gly) (interchain with G-Cter in ISG15) cross-link involves residue K349. Residues C352, C360, C365, and C368 each coordinate Zn(2+). A Glycyl lysine isopeptide (Lys-Gly) (interchain with G-Cter in ISG15) cross-link involves residue K369. Zn(2+) contacts are provided by H373 and C377. Positions 378–410 (SAVFEASGTTTQAYRVDERAAEQARWEAASKET) are REP. Zn(2+) contacts are provided by C418 and C421. The RING-type 2; atypical zinc-finger motif lies at 418 to 449 (CPRCHVPVEKNGGCMHMKCPQPQCRLEWCWNC). The active site involves C431. C436, C441, C446, C449, C457, and H461 together coordinate Zn(2+).

This sequence belongs to the RBR family. Parkin subfamily. In terms of assembly, forms an E3 ubiquitin ligase complex with UBE2L3 or UBE2L6. Mediates 'Lys-63'-linked polyubiquitination by associating with UBE2V1. Part of a SCF-like complex, consisting of PRKN, CUL1 and FBXW7. Interacts with SNCAIP. Binds to the C2A and C2B domains of SYT11. Interacts and regulates the turnover of SEPTIN5. Part of a complex, including STUB1, HSP70 and GPR37. The amount of STUB1 in the complex increases during ER stress. STUB1 promotes the dissociation of HSP70 from PRKN and GPR37, thus facilitating PRKN-mediated GPR37 ubiquitination. HSP70 transiently associates with unfolded GPR37 and inhibits the E3 activity of PRKN, whereas, STUB1 enhances the E3 activity of PRKN through promotion of dissociation of HSP70 from PRKN-GPR37 complexes. Interacts with PSMD4 and PACRG. Interacts with LRRK2. Interacts with RANBP2. Interacts with SUMO1 but not SUMO2, which promotes nuclear localization and autoubiquitination. Interacts (via first RING-type domain) with AIMP2 (via N-terminus). Interacts with PSMA7 and RNF41. Interacts with PINK1. Forms a complex with PINK1 and PARK7. Interacts with CHPF, the interaction with isoform 2 may facilitate PRKN transport into the mitochondria. Interacts with MFN2 (phosphorylated), promotes PRKN localization in dysfunctional depolarized mitochondria. Interacts with FBXO7; this promotes translocation to dysfunctional depolarized mitochondria. Interacts with ZNF746. Interacts with heat shock protein 70 family members, including HSPA1L, HSPA1A and HSPA8; interaction HSPA1L promotes translocation to damaged mitochondria. Interacts with BAG4 and, to a lesser extent, BAG5; interaction with BAG4 inhibits translocation to damaged mitochondria. Forms a complex with PRKN and PARK7. Interacts with AMBRA1. In terms of processing, ISGylated. Conjugated to ubiquitin-like protein ISG15 upon IFN-beta stimulation. ISGylation positively regulates its E3 ligase activity. Auto-ubiquitinates in an E2-dependent manner leading to its own degradation. Also polyubiquitinated by RNF41 for proteasomal degradation. Post-translationally, S-nitrosylated. The inhibition of PRKN ubiquitin E3 ligase activity by S-nitrosylation could contribute to the degenerative process in PD by impairing the ubiquitination of PRKN substrates. In terms of processing, phosphorylated. Activation requires phosphorylation at Ser-65 by PINK1 and binding to PINK1 phosphorylated ubiquitin. Phosphorylation at Thr-175 by PINK1 and at Thr-217 is important for mitochondrial localization. Highly expressed in the brain including the substantia nigra. Expressed in heart, testis and skeletal muscle. Expression is down-regulated or absent in tumor biopsies, and absent in the brain of PARK2 patients. Overexpression protects dopamine neurons from kainate-mediated apoptosis. Found in serum (at protein level).

Its subcellular location is the cytoplasm. It localises to the cytosol. The protein localises to the nucleus. The protein resides in the endoplasmic reticulum. It is found in the mitochondrion. Its subcellular location is the mitochondrion outer membrane. It localises to the cell projection. The protein localises to the neuron projection. The protein resides in the postsynaptic density. It is found in the presynapse. The enzyme catalyses [E2 ubiquitin-conjugating enzyme]-S-ubiquitinyl-L-cysteine + [acceptor protein]-L-lysine = [E2 ubiquitin-conjugating enzyme]-L-cysteine + [acceptor protein]-N(6)-ubiquitinyl-L-lysine.. The protein operates within protein modification; protein ubiquitination. In the autoinhibited state the side chain of Phe-463 inserts into a hydrophobic groove in RING-0, occluding the ubiquitin acceptor site Cys-431, whereas the REP repressor element binds RING-1 and blocks its E2-binding site. Activation of PRKN requires 2 steps: (1) phosphorylation at Ser-65 by PINK1 and (2) binding to phosphorylated ubiquitin, leading to unlock repression of the catalytic Cys-431 by the RING-0 region via an allosteric mechanism and converting PRKN to its fully-active form. According to another report, phosphorylation at Ser-65 by PINK1 is not essential for activation and only binding to phosphorylated ubiquitin is essential to unlock repression. In addition, ISG15 conjugation positively regulates its ubiquitin E3 ligase activity by suppressing the intramolecular interaction that maintains its autoinhibited conformation. Its function is as follows. Functions within a multiprotein E3 ubiquitin ligase complex, catalyzing the covalent attachment of ubiquitin moieties onto substrate proteins. Substrates include SYT11 and VDAC1. Other substrates are BCL2, CCNE1, GPR37, RHOT1/MIRO1, MFN1, MFN2, STUB1, SNCAIP, SEPTIN5, TOMM20, USP30, ZNF746, MIRO1 and AIMP2. Mediates monoubiquitination as well as 'Lys-6', 'Lys-11', 'Lys-48'-linked and 'Lys-63'-linked polyubiquitination of substrates depending on the context. Participates in the removal and/or detoxification of abnormally folded or damaged protein by mediating 'Lys-63'-linked polyubiquitination of misfolded proteins such as PARK7: 'Lys-63'-linked polyubiquitinated misfolded proteins are then recognized by HDAC6, leading to their recruitment to aggresomes, followed by degradation. Mediates 'Lys-63'-linked polyubiquitination of a 22 kDa O-linked glycosylated isoform of SNCAIP, possibly playing a role in Lewy-body formation. Mediates monoubiquitination of BCL2, thereby acting as a positive regulator of autophagy. Protects against mitochondrial dysfunction during cellular stress, by acting downstream of PINK1 to coordinate mitochondrial quality control mechanisms that remove and replace dysfunctional mitochondrial components. Depending on the severity of mitochondrial damage and/or dysfunction, activity ranges from preventing apoptosis and stimulating mitochondrial biogenesis to regulating mitochondrial dynamics and eliminating severely damaged mitochondria via mitophagy. Activation and recruitment onto the outer membrane of damaged/dysfunctional mitochondria (OMM) requires PINK1-mediated phosphorylation of both PRKN and ubiquitin. After mitochondrial damage, functions with PINK1 to mediate the decision between mitophagy or preventing apoptosis by inducing either the poly- or monoubiquitination of VDAC1, respectively; polyubiquitination of VDAC1 promotes mitophagy, while monoubiquitination of VDAC1 decreases mitochondrial calcium influx which ultimately inhibits apoptosis. When cellular stress results in irreversible mitochondrial damage, promotes the autophagic degradation of dysfunctional depolarized mitochondria (mitophagy) by promoting the ubiquitination of mitochondrial proteins such as TOMM20, RHOT1/MIRO1, MFN1 and USP30. Preferentially assembles 'Lys-6'-, 'Lys-11'- and 'Lys-63'-linked polyubiquitin chains, leading to mitophagy. The PINK1-PRKN pathway also promotes fission of damaged mitochondria by PINK1-mediated phosphorylation which promotes the PRKN-dependent degradation of mitochondrial proteins involved in fission such as MFN2. This prevents the refusion of unhealthy mitochondria with the mitochondrial network or initiates mitochondrial fragmentation facilitating their later engulfment by autophagosomes. Regulates motility of damaged mitochondria via the ubiquitination and subsequent degradation of MIRO1 and MIRO2; in motor neurons, this likely inhibits mitochondrial intracellular anterograde transport along the axons which probably increases the chance of the mitochondria undergoing mitophagy in the soma. Involved in mitochondrial biogenesis via the 'Lys-48'-linked polyubiquitination of transcriptional repressor ZNF746/PARIS which leads to its subsequent proteasomal degradation and allows activation of the transcription factor PPARGC1A. Limits the production of reactive oxygen species (ROS). Regulates cyclin-E during neuronal apoptosis. In collaboration with CHPF isoform 2, may enhance cell viability and protect cells from oxidative stress. Independently of its ubiquitin ligase activity, protects from apoptosis by the transcriptional repression of p53/TP53. May protect neurons against alpha synuclein toxicity, proteasomal dysfunction, GPR37 accumulation, and kainate-induced excitotoxicity. May play a role in controlling neurotransmitter trafficking at the presynaptic terminal and in calcium-dependent exocytosis. May represent a tumor suppressor gene. The chain is E3 ubiquitin-protein ligase parkin from Homo sapiens (Human).